Consider the following 316-residue polypeptide: tRNA dimethylallyltransferase (316 aa).

Residue G17 to T24 participates in ATP binding. T19–T24 serves as a coordination point for substrate. Interaction with substrate tRNA regions lie at residues D42 to L45, Q166 to R170, and R247 to R252.

The protein belongs to the IPP transferase family. As to quaternary structure, monomer. Mg(2+) serves as cofactor.

It catalyses the reaction adenosine(37) in tRNA + dimethylallyl diphosphate = N(6)-dimethylallyladenosine(37) in tRNA + diphosphate. Catalyzes the transfer of a dimethylallyl group onto the adenine at position 37 in tRNAs that read codons beginning with uridine, leading to the formation of N6-(dimethylallyl)adenosine (i(6)A). The polypeptide is tRNA dimethylallyltransferase (Klebsiella pneumoniae (strain 342)).